Consider the following 77-residue polypeptide: Sec-independent protein translocase protein TatA (77 aa).

The chain crosses the membrane as a helical span at residues 1-21 (MGGISIWQLLIIALIVVLLFG). Basic and acidic residues-rich tracts occupy residues 47–56 (EKKALEDKEA) and 65–77 (TEKKPEADKKEQA). The interval 47 to 77 (EKKALEDKEAAAQTTQQATEKKPEADKKEQA) is disordered.

This sequence belongs to the TatA/E family. As to quaternary structure, the Tat system comprises two distinct complexes: a TatABC complex, containing multiple copies of TatA, TatB and TatC subunits, and a separate TatA complex, containing only TatA subunits. Substrates initially bind to the TatABC complex, which probably triggers association of the separate TatA complex to form the active translocon.

The protein resides in the cell inner membrane. Part of the twin-arginine translocation (Tat) system that transports large folded proteins containing a characteristic twin-arginine motif in their signal peptide across membranes. TatA could form the protein-conducting channel of the Tat system. The polypeptide is Sec-independent protein translocase protein TatA (Shewanella amazonensis (strain ATCC BAA-1098 / SB2B)).